The chain runs to 529 residues: Probable biotin-dependent acyl-coenzyme A carboxylase beta2 subunit (529 aa).

The 252-residue stretch at 20–271 folds into the CoA carboxyltransferase N-terminal domain; sequence MSGKLDEINA…IKQGPAPAPV (252 aa). In terms of domain architecture, CoA carboxyltransferase C-terminal spans 270-520; the sequence is PVTEPLFDAE…SAIANGPIKG (251 aa).

It belongs to the AccD/PCCB family. In terms of assembly, the biotin-dependent acyl-CoA carboxylase complex is composed of an AccA protein, which contains the biotin carboxylase (BC) and biotin carboxyl carrier protein (BCCP) domains, and an AccD protein, which contains the carboxyl transferase (CT) domain.

Functionally, component of a biotin-dependent acyl-CoA carboxylase complex. This subunit transfers the CO2 from carboxybiotin to the CoA ester substrate. This Mycobacterium tuberculosis (strain ATCC 25618 / H37Rv) protein is Probable biotin-dependent acyl-coenzyme A carboxylase beta2 subunit (accD2).